The primary structure comprises 226 residues: Cytochrome c biogenesis ATP-binding export protein CcmA (226 aa).

An ABC transporter domain is found at 19–226 (LRANDLAFSR…LGGAHALPPA (208 aa)). 51–58 (GPNGSGKS) is an ATP binding site.

This sequence belongs to the ABC transporter superfamily. CcmA exporter (TC 3.A.1.107) family. As to quaternary structure, the complex is composed of two ATP-binding proteins (CcmA) and two transmembrane proteins (CcmB).

Its subcellular location is the cell inner membrane. It catalyses the reaction heme b(in) + ATP + H2O = heme b(out) + ADP + phosphate + H(+). In terms of biological role, part of the ABC transporter complex CcmAB involved in the biogenesis of c-type cytochromes; once thought to export heme, this seems not to be the case, but its exact role is uncertain. Responsible for energy coupling to the transport system. In Cupriavidus pinatubonensis (strain JMP 134 / LMG 1197) (Cupriavidus necator (strain JMP 134)), this protein is Cytochrome c biogenesis ATP-binding export protein CcmA.